Reading from the N-terminus, the 360-residue chain is Phospho-N-acetylmuramoyl-pentapeptide-transferase (360 aa).

10 helical membrane passes run A26–A46, P72–Y92, S94–V114, W132–G152, V168–G188, G199–T219, A236–F256, V263–L283, F288–V308, and V338–K358.

It belongs to the glycosyltransferase 4 family. MraY subfamily. Mg(2+) serves as cofactor.

It localises to the cell inner membrane. It catalyses the reaction UDP-N-acetyl-alpha-D-muramoyl-L-alanyl-gamma-D-glutamyl-meso-2,6-diaminopimeloyl-D-alanyl-D-alanine + di-trans,octa-cis-undecaprenyl phosphate = di-trans,octa-cis-undecaprenyl diphospho-N-acetyl-alpha-D-muramoyl-L-alanyl-D-glutamyl-meso-2,6-diaminopimeloyl-D-alanyl-D-alanine + UMP. It functions in the pathway cell wall biogenesis; peptidoglycan biosynthesis. Functionally, catalyzes the initial step of the lipid cycle reactions in the biosynthesis of the cell wall peptidoglycan: transfers peptidoglycan precursor phospho-MurNAc-pentapeptide from UDP-MurNAc-pentapeptide onto the lipid carrier undecaprenyl phosphate, yielding undecaprenyl-pyrophosphoryl-MurNAc-pentapeptide, known as lipid I. In Klebsiella pneumoniae (strain 342), this protein is Phospho-N-acetylmuramoyl-pentapeptide-transferase.